We begin with the raw amino-acid sequence, 310 residues long: HPr kinase/phosphorylase (310 aa).

Catalysis depends on residues His138 and Lys159. 153–160 (GKSGVGKS) is a binding site for ATP. Ser160 provides a ligand contact to Mg(2+). Asp177 acts as the Proton acceptor; for phosphorylation activity. Proton donor; for dephosphorylation activity in catalysis. Residues 201-210 (LEIRGLGIIN) are important for the catalytic mechanism of both phosphorylation and dephosphorylation. Residue Glu202 participates in Mg(2+) binding. The active site involves Arg243. The interval 264–269 (PVRPGR) is important for the catalytic mechanism of dephosphorylation.

The protein belongs to the HPrK/P family. As to quaternary structure, homohexamer. Mg(2+) is required as a cofactor.

The catalysed reaction is [HPr protein]-L-serine + ATP = [HPr protein]-O-phospho-L-serine + ADP + H(+). It catalyses the reaction [HPr protein]-O-phospho-L-serine + phosphate + H(+) = [HPr protein]-L-serine + diphosphate. In terms of biological role, catalyzes the ATP- as well as the pyrophosphate-dependent phosphorylation of a specific serine residue in HPr, a phosphocarrier protein of the phosphoenolpyruvate-dependent sugar phosphotransferase system (PTS). HprK/P also catalyzes the pyrophosphate-producing, inorganic phosphate-dependent dephosphorylation (phosphorolysis) of seryl-phosphorylated HPr (P-Ser-HPr). The two antagonistic activities of HprK/P are regulated by several intracellular metabolites, which change their concentration in response to the absence or presence of rapidly metabolisable carbon sources (glucose, fructose, etc.) in the growth medium. Also phosphorylates/dephosphorylates the HPr-like catabolite repression protein crh on a specific serine residue. Therefore, by controlling the phosphorylation state of HPr and crh, HPrK/P is a sensor enzyme that plays a major role in the regulation of carbon metabolism and sugar transport: it mediates carbon catabolite repression (CCR), and regulates PTS-catalyzed carbohydrate uptake and inducer exclusion. This Bacillus velezensis (strain DSM 23117 / BGSC 10A6 / LMG 26770 / FZB42) (Bacillus amyloliquefaciens subsp. plantarum) protein is HPr kinase/phosphorylase.